The primary structure comprises 230 residues: Ribonuclease 3 (230 aa).

The RNase III domain maps to 10-133 (DPRLLSRIGY…IIGAIYLDSG (124 aa)). Residue glutamate 46 participates in Mg(2+) binding. Aspartate 50 is a catalytic residue. Residues aspartate 119 and glutamate 122 each contribute to the Mg(2+) site. Glutamate 122 is an active-site residue. The DRBM domain maps to 161-230 (DPKSRLQEYL…AAEILKLLEQ (70 aa)).

It belongs to the ribonuclease III family. In terms of assembly, homodimer. Mg(2+) is required as a cofactor.

Its subcellular location is the cytoplasm. The enzyme catalyses Endonucleolytic cleavage to 5'-phosphomonoester.. In terms of biological role, digests double-stranded RNA. Involved in the processing of primary rRNA transcript to yield the immediate precursors to the large and small rRNAs (23S and 16S). Processes some mRNAs, and tRNAs when they are encoded in the rRNA operon. Processes pre-crRNA and tracrRNA of type II CRISPR loci if present in the organism. The protein is Ribonuclease 3 (rnc) of Acinetobacter pittii (strain PHEA-2).